A 453-amino-acid polypeptide reads, in one-letter code: Probable tRNA methyltransferase 9B (453 aa).

At serine 214 the chain carries Phosphoserine.

It belongs to the methyltransferase superfamily.

In terms of biological role, may modify wobble uridines in specific arginine and glutamic acid tRNAs. Acts as a tumor suppressor by promoting the expression of LIN9. This chain is Probable tRNA methyltransferase 9B (TRMT9B), found in Bos taurus (Bovine).